We begin with the raw amino-acid sequence, 262 residues long: Glucosamine-6-phosphate deaminase (262 aa).

The active-site Proton acceptor; for enolization step is the D63. The For ring-opening step role is filled by N129. H131 (proton acceptor; for ring-opening step) is an active-site residue. E136 functions as the For ring-opening step in the catalytic mechanism.

This sequence belongs to the glucosamine/galactosamine-6-phosphate isomerase family. NagB subfamily.

The enzyme catalyses alpha-D-glucosamine 6-phosphate + H2O = beta-D-fructose 6-phosphate + NH4(+). Its pathway is amino-sugar metabolism; N-acetylneuraminate degradation; D-fructose 6-phosphate from N-acetylneuraminate: step 5/5. Its function is as follows. Catalyzes the reversible isomerization-deamination of glucosamine 6-phosphate (GlcN6P) to form fructose 6-phosphate (Fru6P) and ammonium ion. This Bacillus cereus (strain B4264) protein is Glucosamine-6-phosphate deaminase.